Consider the following 292-residue polypeptide: 33 kDa chaperonin (292 aa).

2 disulfide bridges follow: Cys230/Cys232 and Cys263/Cys266.

The protein belongs to the HSP33 family. In terms of processing, under oxidizing conditions two disulfide bonds are formed involving the reactive cysteines. Under reducing conditions zinc is bound to the reactive cysteines and the protein is inactive.

Its subcellular location is the cytoplasm. In terms of biological role, redox regulated molecular chaperone. Protects both thermally unfolding and oxidatively damaged proteins from irreversible aggregation. Plays an important role in the bacterial defense system toward oxidative stress. The protein is 33 kDa chaperonin of Salmonella typhi.